The chain runs to 736 residues: Polyribonucleotide nucleotidyltransferase (736 aa).

Mg(2+)-binding residues include Asp493 and Asp499. The KH domain maps to 560-619 (PQHAELVVNPDAIRMIIGPGGKNIKQITTVTGAAIDINDSGKISIFAPTSEAMEQAKQMI). In terms of domain architecture, S1 motif spans 629–703 (GKNYKGKVRK…SRKAVLLEEE (75 aa)). The disordered stretch occupies residues 710–736 (EESSRFSKGNRNGDRSRHNNRERTRRT). Residues 720-736 (RNGDRSRHNNRERTRRT) are compositionally biased toward basic and acidic residues.

It belongs to the polyribonucleotide nucleotidyltransferase family. The cofactor is Mg(2+).

It localises to the cytoplasm. It carries out the reaction RNA(n+1) + phosphate = RNA(n) + a ribonucleoside 5'-diphosphate. In terms of biological role, involved in mRNA degradation. Catalyzes the phosphorolysis of single-stranded polyribonucleotides processively in the 3'- to 5'-direction. The protein is Polyribonucleotide nucleotidyltransferase of Lawsonia intracellularis (strain PHE/MN1-00).